The primary structure comprises 91 residues: Probable Thioredoxin (91 aa).

In terms of domain architecture, Glutaredoxin spans M1–S91. C12 and C15 form a disulfide bridge.

This sequence belongs to the glutaredoxin family.

The protein localises to the cytoplasm. Its function is as follows. Acts to maintain redox homeostasis; functions as a protein disulfide reductase. In Archaeoglobus fulgidus (strain ATCC 49558 / DSM 4304 / JCM 9628 / NBRC 100126 / VC-16), this protein is Probable Thioredoxin.